The chain runs to 207 residues: MARYTGPKAKLSRREGTDLFLKSARRSLADKCKLDSKPGQHGRTSGARTSDYGNQLREKQKVKRIYGVLERQFRRYFAEADRRKGNTGENLLQLLESRLDNVVYRMGFGSTRAEARQLVSHKAILVNGQTLNVPSAQIKSGDVVTIREQSKKQVRIAEALSLAEQSGFPTWVAVDSKKFEGTFKQVPDRADISGDINESLIVELYSR.

The segment at 33-54 is disordered; sequence KLDSKPGQHGRTSGARTSDYGN. Positions 42–53 are enriched in polar residues; that stretch reads GRTSGARTSDYG. The S4 RNA-binding domain maps to 97-160; it reads SRLDNVVYRM…KKQVRIAEAL (64 aa).

It belongs to the universal ribosomal protein uS4 family. Part of the 30S ribosomal subunit. Contacts protein S5. The interaction surface between S4 and S5 is involved in control of translational fidelity.

Functionally, one of the primary rRNA binding proteins, it binds directly to 16S rRNA where it nucleates assembly of the body of the 30S subunit. With S5 and S12 plays an important role in translational accuracy. This Cupriavidus necator (strain ATCC 17699 / DSM 428 / KCTC 22496 / NCIMB 10442 / H16 / Stanier 337) (Ralstonia eutropha) protein is Small ribosomal subunit protein uS4.